The following is a 444-amino-acid chain: MVEKFDTIYDYYVDKGYEPSKKRDIIAVFRVTPAEGYTIEQAAGAVAAESSTGTWTTLYPWYEQERWADLSAKAYDFHDMGDGSWIVRIAYPFHAFEEANLPGLLASIAGNIFGMKRVKGLRLEDLYFPEKLIREFDGPAFGIEGVRKMLEIKDRPIYGVVPKPKVGYSPEEFEKLAYDLLSNGADYMKDDENLTSPWYNRFEERAEIMAKIIDKVENETGEKKTWFANITADLLEMEQRLEVLADLGLKHAMVDVVITGWGALRYIRDLAADYGLAIHGHRAMHAAFTRNPYHGISMFVLAKLYRLIGIDQLHVGTAGAGKLEGGKWDVIQNARILRESHYKPDENDVFHLEQKFYSIKAAFPTSSGGLHPGNIQPVIEALGTDIVLQLGGGTLGHPDGPAAGARAVRQAIDAIMQGIPLDEYAKTHKELARALEKWGHVTPV.

Lys163 acts as the Proton acceptor in catalysis. Lys165 serves as a coordination point for substrate. Mg(2+) is bound by residues Lys189, Asp191, and Glu192. Lys189 bears the N6-carboxylysine mark. The active-site Proton acceptor is His281. Substrate is bound by residues Arg282, His314, 367 to 369 (SGG), and 389 to 392 (QLGG).

The protein belongs to the RuBisCO large chain family. Type III subfamily. Homodecamer, consisting of five dimer units which form a ring-like pentagonal structure. This arrangement is essential for its high thermostability. In contrast to form I RuBisCO, the form III RuBisCO is composed solely of large subunits. Requires Mg(2+) as cofactor.

It catalyses the reaction 2 (2R)-3-phosphoglycerate + 2 H(+) = D-ribulose 1,5-bisphosphate + CO2 + H2O. It carries out the reaction D-ribulose 1,5-bisphosphate + O2 = 2-phosphoglycolate + (2R)-3-phosphoglycerate + 2 H(+). Catalyzes the addition of molecular CO(2) and H(2)O to ribulose 1,5-bisphosphate (RuBP), generating two molecules of 3-phosphoglycerate (3-PGA). Functions in an archaeal AMP degradation pathway, together with AMP phosphorylase and R15P isomerase. The polypeptide is Ribulose bisphosphate carboxylase (Thermococcus kodakarensis (strain ATCC BAA-918 / JCM 12380 / KOD1) (Pyrococcus kodakaraensis (strain KOD1))).